We begin with the raw amino-acid sequence, 401 residues long: Tyrosine--tRNA ligase (401 aa).

The 'HIGH' region motif lies at Pro-45–His-54. The 'KMSKS' region motif lies at Lys-230–Ser-234. Lys-233 lines the ATP pocket. One can recognise an S4 RNA-binding domain in the interval Ile-339–Val-399.

This sequence belongs to the class-I aminoacyl-tRNA synthetase family. TyrS type 2 subfamily. As to quaternary structure, homodimer.

It localises to the cytoplasm. The enzyme catalyses tRNA(Tyr) + L-tyrosine + ATP = L-tyrosyl-tRNA(Tyr) + AMP + diphosphate + H(+). Functionally, catalyzes the attachment of tyrosine to tRNA(Tyr) in a two-step reaction: tyrosine is first activated by ATP to form Tyr-AMP and then transferred to the acceptor end of tRNA(Tyr). This Campylobacter jejuni subsp. jejuni serotype O:2 (strain ATCC 700819 / NCTC 11168) protein is Tyrosine--tRNA ligase.